A 169-amino-acid polypeptide reads, in one-letter code: dCTP pyrophosphatase 1 (169 aa).

The disordered stretch occupies residues 1–26 (MSASEEMLGGARGESTTATGPFSFSS). A compositionally biased stretch (polar residues) spans 14–26 (ESTTATGPFSFSS). Substrate is bound by residues histidine 37 and 46 to 50 (WEQFH). Mg(2+) contacts are provided by glutamate 62 and glutamate 65. Tryptophan 72 provides a ligand contact to substrate. Serine 84 is modified (phosphoserine). Mg(2+) is bound by residues glutamate 94 and aspartate 97. Tyrosine 101 is a substrate binding site. Residues 143–169 (LPHGATSENQAMGPADPASESTGQVST) form a disordered region.

Homotetramer. Requires Mg(2+) as cofactor.

It is found in the cytoplasm. The protein resides in the cytosol. It carries out the reaction dCTP + H2O = dCMP + diphosphate + H(+). In terms of biological role, hydrolyzes deoxynucleoside triphosphates (dNTPs) to the corresponding nucleoside monophosphates. Has a strong preference for dCTP and its analogs including 5-iodo-dCTP and 5-methyl-dCTP for which it may even have a higher efficiency. May protect DNA or RNA against the incorporation of these genotoxic nucleotide analogs through their catabolism. This chain is dCTP pyrophosphatase 1, found in Bos taurus (Bovine).